The following is a 419-amino-acid chain: Ubiquitin-like modifier-activating enzyme 5 (419 aa).

The tract at residues 18-47 (NRLGNVKKDHPLESSSNSKPTHQPKSPAPY) is disordered. Residues 30–41 (ESSSNSKPTHQP) are compositionally biased toward polar residues. Positions 94, 115, 138, 161, and 194 each coordinate ATP. Positions 236 and 239 each coordinate Zn(2+). Catalysis depends on C260, which acts as the Glycyl thioester intermediate. Residues C313 and C318 each contribute to the Zn(2+) site.

The protein belongs to the ubiquitin-activating E1 family. UBA5 subfamily. Interacts with ufc-1. As to expression, expressed in the intestine.

Its function is as follows. E1-like enzyme which activates ufm-1. Required for interaction between ufm-1 and ufc-1. This is Ubiquitin-like modifier-activating enzyme 5 from Caenorhabditis elegans.